We begin with the raw amino-acid sequence, 85 residues long: Small ribosomal subunit protein bS20 (85 aa).

A disordered region spans residues 1–25; the sequence is MANIKSAIKRAKLSEERRAHNASIK.

It belongs to the bacterial ribosomal protein bS20 family.

In terms of biological role, binds directly to 16S ribosomal RNA. The chain is Small ribosomal subunit protein bS20 from Bacillus anthracis (strain A0248).